Consider the following 291-residue polypeptide: Protease HtpX homolog (291 aa).

2 consecutive transmembrane segments (helical) span residues 4 to 24 and 38 to 58; these read IVLF…SARL and MGML…ISLM. Residue His-144 coordinates Zn(2+). Residue Glu-145 is part of the active site. Position 148 (His-148) interacts with Zn(2+). The next 2 helical transmembrane spans lie at 152–172 and 199–219; these read GDMV…IFLA and VSSI…VMFF. Glu-224 lines the Zn(2+) pocket.

The protein belongs to the peptidase M48B family. The cofactor is Zn(2+).

It is found in the cell inner membrane. The polypeptide is Protease HtpX homolog (Prosthecochloris aestuarii (strain DSM 271 / SK 413)).